The following is a 232-amino-acid chain: Large ribosomal subunit protein uL1 (232 aa).

This sequence belongs to the universal ribosomal protein uL1 family. In terms of assembly, part of the 50S ribosomal subunit.

Binds directly to 23S rRNA. The L1 stalk is quite mobile in the ribosome, and is involved in E site tRNA release. Its function is as follows. Protein L1 is also a translational repressor protein, it controls the translation of the L11 operon by binding to its mRNA. This is Large ribosomal subunit protein uL1 from Porphyromonas gingivalis (strain ATCC 33277 / DSM 20709 / CIP 103683 / JCM 12257 / NCTC 11834 / 2561).